A 161-amino-acid chain; its full sequence is Arginine repressor (161 aa).

The protein belongs to the ArgR family.

Its subcellular location is the cytoplasm. It participates in amino-acid biosynthesis; L-arginine biosynthesis [regulation]. In terms of biological role, regulates arginine biosynthesis genes. The chain is Arginine repressor from Corynebacterium aurimucosum (strain ATCC 700975 / DSM 44827 / CIP 107346 / CN-1) (Corynebacterium nigricans).